A 226-amino-acid chain; its full sequence is uncharacterized protein (226 aa).

It belongs to the mimivirus L246/L426 family.

This is an uncharacterized protein from Acanthamoeba polyphaga mimivirus (APMV).